Here is a 20-residue protein sequence, read N- to C-terminus: Venom protease (20 aa).

It belongs to the peptidase S1 family. Contains 3 disulfide bonds. In terms of processing, N-glycosylated. In terms of tissue distribution, expressed by the venom duct.

Its subcellular location is the secreted. This is Venom protease from Bombus terrestris (Buff-tailed bumblebee).